We begin with the raw amino-acid sequence, 603 residues long: Sesquiterpene synthase Cad (603 aa).

A compositionally biased stretch (polar residues) spans 1 to 13 (MAEVGLSQNSYAS). The segment at 1-23 (MAEVGLSQNSYASANHDKKSEQQ) is disordered. Residues aspartate 357, aspartate 361, aspartate 498, and glutamate 506 each coordinate Mg(2+). The DDXXD motif signature appears at 357 to 361 (DDIFD).

Belongs to the terpene synthase family. Tpsa subfamily. Mg(2+) is required as a cofactor. The cofactor is Mn(2+). Mostly expressed in leaves and, to a lower extent, in stems and xylem.

It catalyses the reaction (2E,6E)-farnesyl diphosphate = beta-cadinene + diphosphate. The protein operates within secondary metabolite biosynthesis; terpenoid biosynthesis. Its function is as follows. Sesquiterpene synthase involved in the biosynthesis of volatile compounds. Mediates the conversion of (2E,6E)-farnesyl diphosphate (FPP) into beta-cadinene. Not active with geranyl diphosphate (GPP) and geranylgeranyl diphosphate (GGPP) as substrates. This chain is Sesquiterpene synthase Cad, found in Chamaecyparis formosensis (Formosan cypress).